The sequence spans 280 residues: B3 domain-containing protein At5g25470 (280 aa).

The TF-B3 1 DNA-binding region spans 20–114 (WKSLSPGQNW…FLEVQIFKND (95 aa)). Residues 122 to 153 (PPEVEPETEPFHPTTPKNSHKETTTASASASA) form a disordered region. A DNA-binding region (TF-B3 2) is located at residues 183 to 276 (YFVKTLTKGN…ELVTAVRVHF (94 aa)).

Its subcellular location is the nucleus. This chain is B3 domain-containing protein At5g25470, found in Arabidopsis thaliana (Mouse-ear cress).